A 400-amino-acid polypeptide reads, in one-letter code: Leucine-rich repeat flightless-interacting protein 2 (400 aa).

2 disordered regions span residues 1–28 (MGTP…SNID) and 53–119 (LERQ…LSEV). S18 carries the post-translational modification Phosphoserine. Residues 29 to 71 (REAEARLAAKRAARAEARDIRMRELERQQKELDEKSDKQYAEN) adopt a coiled-coil conformation. The span at 53-68 (LERQQKELDEKSDKQY) shows a compositional bias: basic and acidic residues. The span at 73 to 102 (TRPSSRNSASATTPLSGNSSRRVSGDTSSL) shows a compositional bias: polar residues. Phosphoserine is present on residues S77, S80, S88, S92, and S96. T99 is subject to Phosphothreonine. S100 and S101 each carry phosphoserine. Coiled-coil stretches lie at residues 106–202 (DTSL…LIEK) and 245–393 (LDVR…KANR).

This sequence belongs to the LRRFIP family. Interacts with DVL3 and FLII. Weakly interacts with MYD88 in resting cells. Following LPS-stimulation, the interaction with MYD88 is rapidly enhanced; the complex gradually dissociates to basal levels after 6 hours of stimulation. Interaction with MYD88 is regulated by LPS-induced phosphorylation. In the presence of LPS, competes with FLII for MYD88-binding.

Functionally, may function as activator of the canonical Wnt signaling pathway, in association with DVL3, upstream of CTNNB1/beta-catenin. Positively regulates Toll-like receptor (TLR) signaling in response to agonist probably by competing with the negative FLII regulator for MYD88-binding. This Bos taurus (Bovine) protein is Leucine-rich repeat flightless-interacting protein 2 (LRRFIP2).